The chain runs to 98 residues: Transcription elongation factor A protein-like 7 (98 aa).

Basic and acidic residues predominate over residues 1-22 (MQKSCNEKEGKPKGSEAKREDE). The segment at 1-33 (MQKSCNEKEGKPKGSEAKREDEQPCGALEGQRL) is disordered. Residues 59–89 (GEEMTGEEEEMERCLEEIRSLRKKFRALHSN) are a coiled coil.

It belongs to the TFS-II family. TFA subfamily.

The protein resides in the nucleus. In terms of biological role, plays a role in the negative regulation of NF-kappa-B signaling at the basal level by modulating transcriptional activity of NF-kappa-B on its target gene promoters. Associates with cyclin D1 promoter containing Myc E-box sequence and transcriptionally represses cyclin D1 expression. Regulates telomerase reverse transcriptase expression and telomerase activity in both ALT (alternative lengthening of telomeres)and telomerase-positive cell lines. The polypeptide is Transcription elongation factor A protein-like 7 (Tceal7) (Mus musculus (Mouse)).